Consider the following 37-residue polypeptide: Large ribosomal subunit protein bL36 (37 aa).

It belongs to the bacterial ribosomal protein bL36 family.

This is Large ribosomal subunit protein bL36 from Leptothrix cholodnii (strain ATCC 51168 / LMG 8142 / SP-6) (Leptothrix discophora (strain SP-6)).